Reading from the N-terminus, the 145-residue chain is uncharacterized protein (145 aa).

This sequence belongs to the methyltransferase superfamily.

Functionally, probable methyltransferase. This is an uncharacterized protein from Schizosaccharomyces pombe (strain 972 / ATCC 24843) (Fission yeast).